The chain runs to 350 residues: Uroporphyrinogen decarboxylase (350 aa).

Residues 23–27, Asp73, Tyr150, Thr205, and His322 each bind substrate; that span reads RQAGR.

Belongs to the uroporphyrinogen decarboxylase family. In terms of assembly, homodimer.

It is found in the cytoplasm. The enzyme catalyses uroporphyrinogen III + 4 H(+) = coproporphyrinogen III + 4 CO2. It functions in the pathway porphyrin-containing compound metabolism; protoporphyrin-IX biosynthesis; coproporphyrinogen-III from 5-aminolevulinate: step 4/4. Its function is as follows. Catalyzes the decarboxylation of four acetate groups of uroporphyrinogen-III to yield coproporphyrinogen-III. The polypeptide is Uroporphyrinogen decarboxylase (Methylococcus capsulatus (strain ATCC 33009 / NCIMB 11132 / Bath)).